The following is a 602-amino-acid chain: Elongation factor 4 (602 aa).

The 183-residue stretch at 7 to 189 (KYIRNFSIVA…AIVNKVPAPD (183 aa)) folds into the tr-type G domain. GTP is bound by residues 19 to 24 (DHGKST) and 136 to 139 (NKID).

Belongs to the TRAFAC class translation factor GTPase superfamily. Classic translation factor GTPase family. LepA subfamily.

It is found in the cell membrane. The catalysed reaction is GTP + H2O = GDP + phosphate + H(+). Required for accurate and efficient protein synthesis under certain stress conditions. May act as a fidelity factor of the translation reaction, by catalyzing a one-codon backward translocation of tRNAs on improperly translocated ribosomes. Back-translocation proceeds from a post-translocation (POST) complex to a pre-translocation (PRE) complex, thus giving elongation factor G a second chance to translocate the tRNAs correctly. Binds to ribosomes in a GTP-dependent manner. This is Elongation factor 4 from Clostridium botulinum (strain ATCC 19397 / Type A).